Here is a 75-residue protein sequence, read N- to C-terminus: Tautomerase PptA (75 aa).

The Proton acceptor; via imino nitrogen role is filled by P2.

The protein belongs to the 4-oxalocrotonate tautomerase family. PptA subfamily. In terms of assembly, homodimer.

Its subcellular location is the cytoplasm. The sequence is that of Tautomerase PptA from Escherichia coli (strain SMS-3-5 / SECEC).